A 118-amino-acid polypeptide reads, in one-letter code: Small ribosomal subunit protein uS13 (118 aa).

Residues 94-118 are disordered; it reads GLPVRGQRTQTNARTRKGPRRLARK. Positions 107-118 are enriched in basic residues; it reads RTRKGPRRLARK.

Belongs to the universal ribosomal protein uS13 family. In terms of assembly, part of the 30S ribosomal subunit. Forms a loose heterodimer with protein S19. Forms two bridges to the 50S subunit in the 70S ribosome.

Functionally, located at the top of the head of the 30S subunit, it contacts several helices of the 16S rRNA. In the 70S ribosome it contacts the 23S rRNA (bridge B1a) and protein L5 of the 50S subunit (bridge B1b), connecting the 2 subunits; these bridges are implicated in subunit movement. Contacts the tRNAs in the A and P-sites. This chain is Small ribosomal subunit protein uS13, found in Nitrosococcus oceani (strain ATCC 19707 / BCRC 17464 / JCM 30415 / NCIMB 11848 / C-107).